The following is a 91-amino-acid chain: MARVTVEDAVKQVGNRFDLVLVAARRARQIAVQGKDPLVDEENDKPTVIALREIELGLVNNQVMDTQDRYEQQEQEAAELAAVAAIAEGRG.

The protein belongs to the RNA polymerase subunit omega family. In terms of assembly, the RNAP catalytic core consists of 2 alpha, 1 beta, 1 beta' and 1 omega subunit. When a sigma factor is associated with the core the holoenzyme is formed, which can initiate transcription.

The enzyme catalyses RNA(n) + a ribonucleoside 5'-triphosphate = RNA(n+1) + diphosphate. Functionally, promotes RNA polymerase assembly. Latches the N- and C-terminal regions of the beta' subunit thereby facilitating its interaction with the beta and alpha subunits. This is DNA-directed RNA polymerase subunit omega from Aeromonas hydrophila subsp. hydrophila (strain ATCC 7966 / DSM 30187 / BCRC 13018 / CCUG 14551 / JCM 1027 / KCTC 2358 / NCIMB 9240 / NCTC 8049).